Here is a 541-residue protein sequence, read N- to C-terminus: Zingiberene synthase (541 aa).

Mg(2+) is bound by residues Asp-295, Asp-299, Asn-439, Ser-443, and Glu-447. Residues 295 to 299 (DDIID) carry the DDXXD motif motif.

Belongs to the terpene synthase family. Mg(2+) serves as cofactor. It depends on Mn(2+) as a cofactor.

It localises to the cytoplasm. The catalysed reaction is (2E,6E)-farnesyl diphosphate = alpha-zingiberene + diphosphate. It participates in secondary metabolite biosynthesis; terpenoid biosynthesis. Its function is as follows. Sesquiterpene synthase converting farnesyl diphosphate into two major products, zingiberene &gt; beta-sesquiphellandrene, and five minor products, 7-epi-sesquithujene, sesquisabinene A, (E)-alpha-bergamotene, (E)-beta-farnesene and beta-bisabolene. Can also accept geranyl diphosphate as substrate, producing nine monoterpenes, with myrcene, limonene and alpha-terpinolene as the major products. This chain is Zingiberene synthase (TPS1), found in Sorghum bicolor (Sorghum).